The chain runs to 367 residues: S-adenosylmethionine:tRNA ribosyltransferase-isomerase (367 aa).

It belongs to the QueA family. Monomer.

The protein localises to the cytoplasm. It carries out the reaction 7-aminomethyl-7-carbaguanosine(34) in tRNA + S-adenosyl-L-methionine = epoxyqueuosine(34) in tRNA + adenine + L-methionine + 2 H(+). Its pathway is tRNA modification; tRNA-queuosine biosynthesis. Transfers and isomerizes the ribose moiety from AdoMet to the 7-aminomethyl group of 7-deazaguanine (preQ1-tRNA) to give epoxyqueuosine (oQ-tRNA). The chain is S-adenosylmethionine:tRNA ribosyltransferase-isomerase from Beijerinckia indica subsp. indica (strain ATCC 9039 / DSM 1715 / NCIMB 8712).